Reading from the N-terminus, the 690-residue chain is Protein hook (690 aa).

The Calponin-homology (CH) domain maps to 6 to 122 (MEIYESLIRW…RLLQLILGCA (117 aa)). Coiled coils occupy residues 134-515 (QIME…HHAE) and 546-577 (ETTQHQLSNLHTKIANLEAALVVKDQELQAAD).

Belongs to the hook family. As to quaternary structure, homodimer. Interacts with microtubules via its N-terminus.

The protein resides in the cytoplasm. The protein localises to the cytoskeleton. It is found in the endosome. Its function is as follows. Involved in endocytic trafficking. Probably acts as a cytoskeletal linker protein that tethers endosome vesicles to the cytoskeleton. The protein is Protein hook of Anopheles gambiae (African malaria mosquito).